Here is a 66-residue protein sequence, read N- to C-terminus: Large ribosomal subunit protein bL33B (66 aa).

This sequence belongs to the bacterial ribosomal protein bL33 family.

This chain is Large ribosomal subunit protein bL33B, found in Synechococcus sp. (strain CC9605).